We begin with the raw amino-acid sequence, 710 residues long: Methionine--tRNA ligase (710 aa).

Positions 16–26 match the 'HIGH' region motif; it reads PYANGAFHIGH. Positions 147, 150, 160, and 163 each coordinate Zn(2+). The 'KMSKS' region signature appears at 350 to 354; it reads KMSKS. Lysine 353 contacts ATP. Residues 604–710 form the tRNA-binding domain; it reads DFAKIDLRIA…PGAEPGMRVG (107 aa).

It belongs to the class-I aminoacyl-tRNA synthetase family. MetG type 1 subfamily. In terms of assembly, homodimer. Zn(2+) is required as a cofactor.

It localises to the cytoplasm. It catalyses the reaction tRNA(Met) + L-methionine + ATP = L-methionyl-tRNA(Met) + AMP + diphosphate. Is required not only for elongation of protein synthesis but also for the initiation of all mRNA translation through initiator tRNA(fMet) aminoacylation. The polypeptide is Methionine--tRNA ligase (Herminiimonas arsenicoxydans).